The chain runs to 302 residues: Formylmethanofuran--tetrahydromethanopterin formyltransferase (302 aa).

Belongs to the FTR family. In terms of assembly, homotetramer.

The protein resides in the cytoplasm. It catalyses the reaction N-formylmethanofuran + 5,6,7,8-tetrahydromethanopterin + H(+) = N(5)-formyl-5,6,7,8-tetrahydromethanopterin + methanofuran. It participates in one-carbon metabolism; formaldehyde degradation; formate from formaldehyde (H(4)MPT route): step 4/5. In terms of biological role, catalyzes the transfer of a formyl group from 5-formyl tetrahydromethanopterin (5-formyl-H(4)MPT) to methanofuran (MFR) to produce formylmethanofuran (formyl-MFR) and tetrahydromethanopterin (H(4)MPT). The protein is Formylmethanofuran--tetrahydromethanopterin formyltransferase of Methylobacillus flagellatus (strain ATCC 51484 / DSM 6875 / VKM B-1610 / KT).